Here is a 63-residue protein sequence, read N- to C-terminus: MFTVFLLVVLATTVVSSPSDRASDGRNAAANEKASDVIALALKGCCSNPVCHLEHSNMCGRRR.

The first 16 residues, Met-1–Ser-16, serve as a signal peptide directing secretion. Residues Ser-17–Lys-43 constitute a propeptide that is removed on maturation. 2 disulfides stabilise this stretch: Cys-45–Cys-51 and Cys-46–Cys-59. Position 58 is a methionine sulfoxide; partial (Met-58). Cys-59 is modified (cysteine amide; partial).

It belongs to the conotoxin A superfamily. As to expression, expressed by the venom duct.

The protein resides in the secreted. Alpha-conotoxins act on postsynaptic membranes, they bind to the nicotinic acetylcholine receptors (nAChR) and thus inhibit them. This Conus stercusmuscarum (Fly-specked cone) protein is Alpha-conotoxin-like Sm1.3.